The primary structure comprises 516 residues: GMP synthase [glutamine-hydrolyzing] (516 aa).

Positions 10-201 (KIIVLDFGSQ…AFDVCGAVAN (192 aa)) constitute a Glutamine amidotransferase type-1 domain. The active-site Nucleophile is the C87. Catalysis depends on residues H175 and E177. Positions 202–391 (WTMADFIDMQ…LGIPHDLVWR (190 aa)) constitute a GMPS ATP-PPase domain. 229 to 235 (SGGVDSS) lines the ATP pocket.

In terms of assembly, homodimer.

The enzyme catalyses XMP + L-glutamine + ATP + H2O = GMP + L-glutamate + AMP + diphosphate + 2 H(+). It participates in purine metabolism; GMP biosynthesis; GMP from XMP (L-Gln route): step 1/1. In terms of biological role, catalyzes the synthesis of GMP from XMP. The protein is GMP synthase [glutamine-hydrolyzing] of Lactobacillus acidophilus (strain ATCC 700396 / NCK56 / N2 / NCFM).